The following is a 121-amino-acid chain: Large ribosomal subunit protein bL12 (121 aa).

It belongs to the bacterial ribosomal protein bL12 family. In terms of assembly, homodimer. Part of the ribosomal stalk of the 50S ribosomal subunit. Forms a multimeric L10(L12)X complex, where L10 forms an elongated spine to which 2 to 4 L12 dimers bind in a sequential fashion. Binds GTP-bound translation factors.

Functionally, forms part of the ribosomal stalk which helps the ribosome interact with GTP-bound translation factors. Is thus essential for accurate translation. The protein is Large ribosomal subunit protein bL12 of Anoxybacillus flavithermus (strain DSM 21510 / WK1).